The following is a 211-amino-acid chain: Thiamine-phosphate synthase (211 aa).

Residues 37 to 41 and Asn69 contribute to the 4-amino-2-methyl-5-(diphosphooxymethyl)pyrimidine site; that span reads QLRIK. Mg(2+)-binding residues include Asp70 and Asp89. Position 108 (Ser108) interacts with 4-amino-2-methyl-5-(diphosphooxymethyl)pyrimidine. 134–136 provides a ligand contact to 2-[(2R,5Z)-2-carboxy-4-methylthiazol-5(2H)-ylidene]ethyl phosphate; the sequence is TQT. Lys137 contributes to the 4-amino-2-methyl-5-(diphosphooxymethyl)pyrimidine binding site. 2-[(2R,5Z)-2-carboxy-4-methylthiazol-5(2H)-ylidene]ethyl phosphate-binding positions include Gly166 and 186–187; that span reads VS.

The protein belongs to the thiamine-phosphate synthase family. It depends on Mg(2+) as a cofactor.

The enzyme catalyses 2-[(2R,5Z)-2-carboxy-4-methylthiazol-5(2H)-ylidene]ethyl phosphate + 4-amino-2-methyl-5-(diphosphooxymethyl)pyrimidine + 2 H(+) = thiamine phosphate + CO2 + diphosphate. The catalysed reaction is 2-(2-carboxy-4-methylthiazol-5-yl)ethyl phosphate + 4-amino-2-methyl-5-(diphosphooxymethyl)pyrimidine + 2 H(+) = thiamine phosphate + CO2 + diphosphate. It catalyses the reaction 4-methyl-5-(2-phosphooxyethyl)-thiazole + 4-amino-2-methyl-5-(diphosphooxymethyl)pyrimidine + H(+) = thiamine phosphate + diphosphate. It functions in the pathway cofactor biosynthesis; thiamine diphosphate biosynthesis; thiamine phosphate from 4-amino-2-methyl-5-diphosphomethylpyrimidine and 4-methyl-5-(2-phosphoethyl)-thiazole: step 1/1. Its function is as follows. Condenses 4-methyl-5-(beta-hydroxyethyl)thiazole monophosphate (THZ-P) and 2-methyl-4-amino-5-hydroxymethyl pyrimidine pyrophosphate (HMP-PP) to form thiamine monophosphate (TMP). The protein is Thiamine-phosphate synthase of Salmonella agona (strain SL483).